Consider the following 830-residue polypeptide: Penicillin-binding protein 1A (830 aa).

Basic residues predominate over residues 1 to 17 (MTERKREHKDRKQKKNS). Residues 1-20 (MTERKREHKDRKQKKNSPKN) are disordered. Over 1–30 (MTERKREHKDRKQKKNSPKNQSKVTKFLKW) the chain is Cytoplasmic. Residues 31–51 (FFIGILLLGITAVTVVGIYVL) traverse the membrane as a helical; Signal-anchor for type II membrane protein segment. Residues 52-830 (SIIRSSPELD…QNGQNNNITQ (779 aa)) lie on the Extracellular side of the membrane. The segment at 72–244 (SILYDDQGNF…PTSYDGLSEA (173 aa)) is transglycosylase. Glu-111 serves as the catalytic Proton donor; for transglycosylase activity. Residues 378–663 (ASATIIDYKT…TSPIFGKIMG (286 aa)) form a transpeptidase region. Ser-417 acts as the Acyl-ester intermediate; for transpeptidase activity in catalysis. The interval 731–830 (APDTNDNNNS…QNGQNNNITQ (100 aa)) is disordered. Over residues 735-746 (NDNNNSGANEGN) the composition is skewed to low complexity. Basic and acidic residues predominate over residues 747-758 (KQQETKPEEVKP). Low complexity-rich tracts occupy residues 759-807 (NENN…NTNN) and 816-830 (GNNQNQNGQNNNITQ).

The protein in the N-terminal section; belongs to the glycosyltransferase 51 family. It in the C-terminal section; belongs to the transpeptidase family.

Its subcellular location is the cell membrane. It catalyses the reaction [GlcNAc-(1-&gt;4)-Mur2Ac(oyl-L-Ala-gamma-D-Glu-L-Lys-D-Ala-D-Ala)](n)-di-trans,octa-cis-undecaprenyl diphosphate + beta-D-GlcNAc-(1-&gt;4)-Mur2Ac(oyl-L-Ala-gamma-D-Glu-L-Lys-D-Ala-D-Ala)-di-trans,octa-cis-undecaprenyl diphosphate = [GlcNAc-(1-&gt;4)-Mur2Ac(oyl-L-Ala-gamma-D-Glu-L-Lys-D-Ala-D-Ala)](n+1)-di-trans,octa-cis-undecaprenyl diphosphate + di-trans,octa-cis-undecaprenyl diphosphate + H(+). The catalysed reaction is Preferential cleavage: (Ac)2-L-Lys-D-Ala-|-D-Ala. Also transpeptidation of peptidyl-alanyl moieties that are N-acyl substituents of D-alanine.. It functions in the pathway cell wall biogenesis; peptidoglycan biosynthesis. Functionally, cell wall formation. Synthesis of cross-linked peptidoglycan from the lipid intermediates. The enzyme has a penicillin-insensitive transglycosylase N-terminal domain (formation of linear glycan strands) and a penicillin-sensitive transpeptidase C-terminal domain (cross-linking of the peptide subunits). This chain is Penicillin-binding protein 1A (pbpA), found in Clostridium perfringens (strain ATCC 13124 / DSM 756 / JCM 1290 / NCIMB 6125 / NCTC 8237 / Type A).